The sequence spans 727 residues: Synaptic vesicle glycoprotein 2C (727 aa).

The tract at residues 1-57 is interaction with SYT1; the sequence is MEDSYKDRTSLMKGAKDIAKEVKKQTVKKVNQAVDRAQDEYTQRSYSRFQDEEDDDD. The Cytoplasmic portion of the chain corresponds to 1-154; it reads MEDSYKDRTS…CGHGRFQWAL (154 aa). The tract at residues 22-128 is disordered; the sequence is VKKQTVKKVN…DRRELESERR (107 aa). Residues Ser75 and Ser76 each carry the phosphoserine modification. Phosphothreonine is present on Thr79. The span at 113-128 shows a compositional bias: basic and acidic residues; that stretch reads KGDEYKDRRELESERR. Residues 155–175 traverse the membrane as a helical segment; the sequence is FFVLGMALMADGVEVFVVGFV. Residues 176–191 are Extracellular-facing; that stretch reads LPSAETDLCIPNSGSG. Residues 192–212 form a helical membrane-spanning segment; it reads WLGSIVYLGMMVGAFFWGGLA. Over 213–226 the chain is Cytoplasmic; that stretch reads DKVGRKQSLLICMS. The chain crosses the membrane as a helical span at residues 227–247; the sequence is VNGFFAFLSSFVQGYGFFLVC. Residue Arg248 is a topological domain, extracellular. A helical transmembrane segment spans residues 249 to 269; sequence LLSGFGIGGAIPTVFSYFAEV. The Cytoplasmic portion of the chain corresponds to 270-280; sequence LAREKRGEHLS. A helical membrane pass occupies residues 281 to 301; sequence WLCMFWMIGGIYASAMAWAII. The Extracellular segment spans residues 302 to 320; the sequence is PHYGWSFSMGSAYQFHSWR. A helical transmembrane segment spans residues 321-341; the sequence is VFVIVCALPCVSSVVALTFMP. At 342–437 the chain is on the cytoplasmic side; sequence ESPRFLLEVG…PVRENTIKLT (96 aa). The chain crosses the membrane as a helical span at residues 438 to 458; it reads IVWFTLSFGYYGLSVWFPDVI. Residues 459–578 lie on the Extracellular side of the membrane; the sequence is KHLQSDEYAL…CQITFDDDYS (120 aa). Tyr466 carries the post-translational modification Phosphotyrosine. 5 N-linked (GlcNAc...) asparagine glycosylation sites follow: Asn480, Asn484, Asn534, Asn559, and Asn565. A helical transmembrane segment spans residues 579 to 599; it reads AYWIYFVNFLGTLAVLPGNIV. The Cytoplasmic portion of the chain corresponds to 600-609; the sequence is SALLMDRIGR. Residues 610–630 form a helical membrane-spanning segment; it reads LTMLGGSMVLSGISCFFLWFG. Topologically, residues 631 to 636 are extracellular; the sequence is TSESMM. Residues 637 to 657 traverse the membrane as a helical segment; the sequence is IGMLCLYNGLTISAWNSLDVV. Over 658–670 the chain is Cytoplasmic; it reads TVELYPTDRRATG. Residues 671-693 form a helical membrane-spanning segment; it reads FGFLNALCKAAAVLGNLIFGSLV. Residues 694-697 are Extracellular-facing; the sequence is SITK. The helical transmembrane segment at 698 to 716 threads the bilayer; that stretch reads AIPILLASTVLVCGGLVGL. Over 717–727 the chain is Cytoplasmic; the sequence is RLPDTRTQVLM.

The protein belongs to the major facilitator superfamily. In terms of assembly, interacts with SYT1 in a calcium-dependent manner. (Microbial infection) Interacts with C.botulinum neurotoxin type A (BoNT/A, botA). As to quaternary structure, (Microbial infection) Interacts with C.botulinum neurotoxin type D (BoNT/D, botD). N-glycosylated. Expressed in specific subsets of conventional synapses in the retina (at protein level). Expressed in diaphragm motor nerve terminals (at protein level). Expressed in a subset of hippocampus neurons (at protein level).

It localises to the cytoplasmic vesicle. It is found in the secretory vesicle. The protein localises to the synaptic vesicle membrane. Its function is as follows. Plays a role in the control of regulated secretion in neural and endocrine cells, enhancing selectively low-frequency neurotransmission. Positively regulates vesicle fusion by maintaining the readily releasable pool of secretory vesicles. (Microbial infection) Receptor for C.botulinum neurotoxin type A (BoNT/A, botA); the toxin binds Sv2c via extracellular loop 4. Functionally, (Microbial infection) Possible receptor for C.botulinum neurotoxin type D (BoNT/D, botD). The polypeptide is Synaptic vesicle glycoprotein 2C (Sv2c) (Mus musculus (Mouse)).